The primary structure comprises 729 residues: Transketolase (729 aa).

Substrate is bound at residue H97. Thiamine diphosphate-binding positions include H138 and 186–188 (GPL). D227 lines the Mg(2+) pocket. The thiamine diphosphate site is built by G228 and N257. N257 and I259 together coordinate Mg(2+). Substrate contacts are provided by H332, R423, and S450. H332 is a thiamine diphosphate binding site. E477 (proton donor) is an active-site residue. F503 is a binding site for thiamine diphosphate. Residues H527, D535, and R586 each contribute to the substrate site.

The protein belongs to the transketolase family. Homodimer. The cofactor is Mg(2+). Requires Ca(2+) as cofactor. It depends on Mn(2+) as a cofactor. Co(2+) is required as a cofactor. Thiamine diphosphate serves as cofactor.

It catalyses the reaction D-sedoheptulose 7-phosphate + D-glyceraldehyde 3-phosphate = aldehydo-D-ribose 5-phosphate + D-xylulose 5-phosphate. Catalyzes the transfer of a two-carbon ketol group from a ketose donor to an aldose acceptor, via a covalent intermediate with the cofactor thiamine pyrophosphate. The protein is Transketolase (tkt) of Streptococcus pyogenes serotype M18 (strain MGAS8232).